The chain runs to 340 residues: Photosystem II protein D1 (340 aa).

The next 3 membrane-spanning stretches (helical) occupy residues 25–42, 114–129, and 138–152; these read YIGW…LATV, HFFL…EWEF, and WIFV…AAAA. Residue His-114 participates in chlorophyll a binding. Trp-122 contributes to the pheophytin a binding site. Residues Asp-166 and Glu-185 each contribute to the [CaMn4O5] cluster site. A helical membrane pass occupies residues 193-214; it reads FHILGVAGVFGGSLFSAMHGSL. His-194 lines the chlorophyll a pocket. Residues His-211 and 260-261 contribute to the a quinone site; that span reads SF. Fe cation is bound at residue His-211. His-268 provides a ligand contact to Fe cation. The helical transmembrane segment at 270–284 threads the bilayer; sequence FLAAWPVIGIWITSL. Residues His-328, Glu-329, Asp-338, and Ala-340 each contribute to the [CaMn4O5] cluster site.

This sequence belongs to the reaction center PufL/M/PsbA/D family. In terms of assembly, PSII is composed of 1 copy each of membrane proteins PsbA, PsbB, PsbC, PsbD, PsbE, PsbF, PsbH, PsbI, PsbJ, PsbK, PsbL, PsbM, PsbT, PsbX, PsbY, PsbZ, Psb30/Ycf12, at least 3 peripheral proteins of the oxygen-evolving complex and a large number of cofactors. It forms dimeric complexes. The cofactor is The D1/D2 heterodimer binds P680, chlorophylls that are the primary electron donor of PSII, and subsequent electron acceptors. It shares a non-heme iron and each subunit binds pheophytin, quinone, additional chlorophylls, carotenoids and lipids. D1 provides most of the ligands for the Mn4-Ca-O5 cluster of the oxygen-evolving complex (OEC). There is also a Cl(-1) ion associated with D1 and D2, which is required for oxygen evolution. The PSII complex binds additional chlorophylls, carotenoids and specific lipids.. Post-translationally, tyr-157 forms a radical intermediate that is referred to as redox-active TyrZ, YZ or Y-Z.

The protein resides in the plastid. The protein localises to the chloroplast thylakoid membrane. The enzyme catalyses 2 a plastoquinone + 4 hnu + 2 H2O = 2 a plastoquinol + O2. Functionally, photosystem II (PSII) is a light-driven water:plastoquinone oxidoreductase that uses light energy to abstract electrons from H(2)O, generating O(2) and a proton gradient subsequently used for ATP formation. It consists of a core antenna complex that captures photons, and an electron transfer chain that converts photonic excitation into a charge separation. The D1/D2 (PsbA/PsbD) reaction center heterodimer binds P680, the primary electron donor of PSII as well as several subsequent electron acceptors. This Amphidinium carterae (Dinoflagellate) protein is Photosystem II protein D1.